We begin with the raw amino-acid sequence, 238 residues long: tRNA (guanine-N(7)-)-methyltransferase (238 aa).

Glutamate 68, glutamate 93, aspartate 120, and aspartate 143 together coordinate S-adenosyl-L-methionine. Residue aspartate 143 is part of the active site. Substrate is bound by residues lysine 147, aspartate 179, and 216–219 (TKFE).

It belongs to the class I-like SAM-binding methyltransferase superfamily. TrmB family.

It carries out the reaction guanosine(46) in tRNA + S-adenosyl-L-methionine = N(7)-methylguanosine(46) in tRNA + S-adenosyl-L-homocysteine. Its pathway is tRNA modification; N(7)-methylguanine-tRNA biosynthesis. Catalyzes the formation of N(7)-methylguanine at position 46 (m7G46) in tRNA. The polypeptide is tRNA (guanine-N(7)-)-methyltransferase (Shewanella sp. (strain MR-4)).